Here is a 647-residue protein sequence, read N- to C-terminus: Protein arginine N-methyltransferase 7 (647 aa).

2 consecutive SAM-dependent MTase PRMT-type domains span residues 12–332 (EREW…FSLW) and 337–647 (GKDK…SEDS). Catalysis depends on residues Glu140 and Glu149.

Belongs to the class I-like SAM-binding methyltransferase superfamily. Protein arginine N-methyltransferase family. PRMT7 subfamily.

In terms of biological role, arginine methyltransferase that can both catalyze the formation of omega-N monomethylarginine (MMA) and symmetrical dimethylarginine (sDMA). This is Protein arginine N-methyltransferase 7 (prmt-7) from Caenorhabditis elegans.